The following is a 212-amino-acid chain: Small ribosomal subunit protein uS4c (212 aa).

In terms of domain architecture, S4 RNA-binding spans 89–152 (MRLDNIIFRL…RSRALVDKNL (64 aa)).

This sequence belongs to the universal ribosomal protein uS4 family. In terms of assembly, part of the 30S ribosomal subunit. Contacts protein S5. The interaction surface between S4 and S5 is involved in control of translational fidelity.

The protein resides in the plastid. Its subcellular location is the chloroplast. In terms of biological role, one of the primary rRNA binding proteins, it binds directly to 16S rRNA where it nucleates assembly of the body of the 30S subunit. With S5 and S12 plays an important role in translational accuracy. The polypeptide is Small ribosomal subunit protein uS4c (rps4) (Staurastrum punctulatum (Green alga)).